A 117-amino-acid chain; its full sequence is Non-specific lipid-transfer protein 2B (117 aa).

The N-terminal stretch at 1–25 (MARAQLVLVALVAALLLAGPHTTMA) is a signal peptide. 4 disulfide bridges follow: Cys-29–Cys-76, Cys-39–Cys-53, Cys-54–Cys-99, and Cys-74–Cys-113.

The protein belongs to the plant LTP family. As to expression, expressed in roots, mesocotyls and developing leaves.

Plant non-specific lipid-transfer proteins transfer phospholipids as well as galactolipids across membranes. May play a role in wax or cutin deposition in the cell walls of expanding epidermal cells and certain secretory tissues. The polypeptide is Non-specific lipid-transfer protein 2B (LTP2-B) (Oryza sativa subsp. japonica (Rice)).